Consider the following 58-residue polypeptide: Temporin-1Th (58 aa).

Residues 1 to 22 (MFTLKKSLLLLFFLGTINLSLC) form the signal peptide. Residues 23–46 (EEERNAEEERRDEPDERDVQVEKR) constitute a propeptide that is removed on maturation. Residues 25–46 (ERNAEEERRDEPDERDVQVEKR) form a disordered region. Residue Leu-56 is modified to Leucine amide.

Expressed by the skin glands.

The protein resides in the secreted. Its function is as follows. Antimicrobial peptide that renders both the outer and inner membrane of bacteria permeable to hydrophobic substances of low molecular mass. This is Temporin-1Th from Rana temporaria (European common frog).